Reading from the N-terminus, the 500-residue chain is 5-taurinomethyluridine-[tRNA] synthase subunit GTPB3, mitochondrial (500 aa).

The N-terminal 73 residues, 1-73 (MHFISCCLRR…RRLTRSLPAP (73 aa)), are a transit peptide targeting the mitochondrion. 5,10-methylenetetrahydrofolate is bound by residues Arg53, Glu111, and Lys151. Positions 248-422 (GVHVVIAGST…LLTLLHNTLK (175 aa)) constitute a TrmE-type G domain. Residues 255 to 262 (GSTNAGKS), 281 to 285 (GTTRD), 302 to 305 (DTAG), and 373 to 376 (NESD) contribute to the GTP site. Asn258 is a K(+) binding site. 2 residues coordinate Mg(2+): Ser262 and Thr283. Lys500 provides a ligand contact to 5,10-methylenetetrahydrofolate.

Belongs to the TRAFAC class TrmE-Era-EngA-EngB-Septin-like GTPase superfamily. TrmE GTPase family. K(+) serves as cofactor.

The protein localises to the mitochondrion. It catalyses the reaction GTP + H2O = GDP + phosphate + H(+). GTPase component of the GTPBP3-MTO1 complex that catalyzes the 5-taurinomethyluridine (taum(5)U) modification at the 34th wobble position (U34) of mitochondrial tRNAs (mt-tRNAs), which plays a role in mt-tRNA decoding and mitochondrial translation. Taum(5)U formation on mammalian mt-tRNA requires the presence of both GTPBP3-mediated GTPase activity and MTO1 catalytic activity. The polypeptide is 5-taurinomethyluridine-[tRNA] synthase subunit GTPB3, mitochondrial (gtpbp3) (Danio rerio (Zebrafish)).